A 522-amino-acid chain; its full sequence is Target of rapamycin complex 2 subunit MAPKAP1 (522 aa).

Residues G2 to H184 are interaction with MAP3K2. The interval G2–K267 is interaction with NBN. Phosphothreonine is present on T86. Phosphoserine is present on residues S128, S186, S315, and S356. A CRIM domain is found at Q139–K267. The SIN1-type RBD stretch occupies residues L279–R353. One can recognise an SIN1-type PH domain in the interval H382–E487. R393 is an a 1,2-diacyl-sn-glycero-3-phospho-(1D-myo-inositol-3,4,5-trisphosphate) binding site. Phosphothreonine is present on T398. A 1,2-diacyl-sn-glycero-3-phospho-(1D-myo-inositol-3,4,5-trisphosphate)-binding residues include K428 and K464. Residues F468–Q522 are interaction with ATF2. At S510 the chain carries Phosphoserine.

The protein belongs to the SIN1 family. Component of the mechanistic target of rapamycin complex 2 (mTORC2), consisting in two heterotretramers composed of MTOR, MLST8, RICTOR and MAPKAP1/SIN1. The mTORC2 core complex associates with PRR5/PROTOR1 and/or PRR5L/PROTOR2. Contrary to mTORC1, mTORC2 does not bind to and is not sensitive to FKBP12-rapamycin. Interacts with MAP3K2. Interacts with ATF2. Interacts with MAPK8. Interacts with GTP-bound HRAS and KRAS; inhibiting their activity. Interacts with IFNAR2. In terms of processing, phosphorylation at Ser-128 by PKC promotes relocalization to the perinuclear region, where the mTORC2 complex specifically mediates phosphorylation of SGK1. Phosphorylated at Thr-86 by AKT1 or RPS6KB1 in the presence of growth factors; the effect of this phosphorylation is however unclear. According to two studies, phosphorylation at Thr-86 by AKT1 is part of a positive feedback loop that increases mTORC2 activation. According to another study, phosphorylation at Thr-86 and Thr-398 by RPS6KB1 promotes dissociation from the mTORC2 complex, leading to inhibit mTORC2 signaling. As to expression, present in the lumenal epithelium and glandular epithelium of endometrium (at protein level).

It localises to the cell membrane. The protein localises to the cytoplasmic vesicle. The protein resides in the endoplasmic reticulum membrane. Its subcellular location is the early endosome membrane. It is found in the late endosome membrane. It localises to the lysosome membrane. The protein localises to the golgi apparatus membrane. The protein resides in the mitochondrion outer membrane. Its subcellular location is the cytoplasm. It is found in the perinuclear region. It localises to the nucleus. Phosphatidylinositol 3,4,5-trisphosphate (PI(3,4,5)P3) promotes MTOR activation by relieving MAPKAP1/SIN1-mediated inhibition of MTOR that takes place in absence of PI(3,4,5)P3. Its function is as follows. Component of the mechanistic target of rapamycin complex 2 (mTORC2), which transduces signals from growth factors to pathways involved in proliferation, cytoskeletal organization, lipogenesis and anabolic output. In response to growth factors, mTORC2 phosphorylates and activates AGC protein kinase family members, including AKT (AKT1, AKT2 and AKT3), PKC (PRKCA, PRKCB and PRKCE) and SGK1. In contrast to mTORC1, mTORC2 is nutrient-insensitive. Within the mTORC2 complex, MAPKAP1/SIN1 acts as a substrate adapter which recognizes and binds AGC protein kinase family members for phosphorylation by MTOR. mTORC2 plays a critical role in AKT1 activation by mediating phosphorylation of different sites depending on the context, such as 'Thr-450', 'Ser-473', 'Ser-477' or 'Thr-479', facilitating the phosphorylation of the activation loop of AKT1 on 'Thr-308' by PDPK1/PDK1 which is a prerequisite for full activation. mTORC2 catalyzes the phosphorylation of SGK1 at 'Ser-422' and of PRKCA on 'Ser-657'. The mTORC2 complex also phosphorylates various proteins involved in insulin signaling, such as FBXW8 and IGF2BP1. mTORC2 acts upstream of Rho GTPases to regulate the actin cytoskeleton, probably by activating one or more Rho-type guanine nucleotide exchange factors. mTORC2 promotes the serum-induced formation of stress-fibers or F-actin. MAPKAP1 inhibits MAP3K2 by preventing its dimerization and autophosphorylation. Inhibits HRAS and KRAS independently of mTORC2 complex. Enhances osmotic stress-induced phosphorylation of ATF2 and ATF2-mediated transcription. Involved in ciliogenesis, regulates cilia length through its interaction with CCDC28B independently of mTORC2 complex. The sequence is that of Target of rapamycin complex 2 subunit MAPKAP1 (MAPKAP1) from Ovis aries (Sheep).